A 152-amino-acid chain; its full sequence is SsrA-binding protein (152 aa).

Belongs to the SmpB family.

It localises to the cytoplasm. Required for rescue of stalled ribosomes mediated by trans-translation. Binds to transfer-messenger RNA (tmRNA), required for stable association of tmRNA with ribosomes. tmRNA and SmpB together mimic tRNA shape, replacing the anticodon stem-loop with SmpB. tmRNA is encoded by the ssrA gene; the 2 termini fold to resemble tRNA(Ala) and it encodes a 'tag peptide', a short internal open reading frame. During trans-translation Ala-aminoacylated tmRNA acts like a tRNA, entering the A-site of stalled ribosomes, displacing the stalled mRNA. The ribosome then switches to translate the ORF on the tmRNA; the nascent peptide is terminated with the 'tag peptide' encoded by the tmRNA and targeted for degradation. The ribosome is freed to recommence translation, which seems to be the essential function of trans-translation. The chain is SsrA-binding protein from Sulfurihydrogenibium sp. (strain YO3AOP1).